The sequence spans 44 residues: Opistoporin-2 (44 aa).

Expressed by the venom gland.

Its subcellular location is the secreted. The protein localises to the target cell membrane. In terms of biological role, at high concentrations, acts as a pore former in cellular membranes and causes the leakage of the cells. At submicromolar concentrations, degranulates granulocytes and has a weak hemolytic activity against human erythrocytes. Also strongly inhibits the production of superoxide anions. Has a strong antibacterial activity against Gram-negative bacteria but is less active against Gram-positive bacteria. Also has antifungal activity. The sequence is that of Opistoporin-2 from Opistophthalmus carinatus (African yellow leg scorpion).